A 602-amino-acid polypeptide reads, in one-letter code: Potassium voltage-gated channel subfamily A member 5 (602 aa).

Positions M1 to E202 are tetramerization domain. At M1–G238 the chain is on the cytoplasmic side. Positions E58–S107 are disordered. Position 81 is a phosphoserine; by CK2 and PKA (S81). K212 is covalently cross-linked (Glycyl lysine isopeptide (Lys-Gly) (interchain with G-Cter in SUMO)). The chain crosses the membrane as a helical span at residues S239–L260. Topologically, residues E261–P314 are extracellular. Residues F315–A336 form a helical membrane-spanning segment. C337 carries S-palmitoyl cysteine lipidation. Residues C337 to I347 lie on the Cytoplasmic side of the membrane. Residues M348–A368 traverse the membrane as a helical segment. Residues E369–S384 lie on the Extracellular side of the membrane. The chain crosses the membrane as a helical; Voltage-sensor span at residues L385–H405. The Cytoplasmic portion of the chain corresponds to S406 to M420. The segment at K407–M420 is S4-S5 linker. A helical transmembrane segment spans residues R421–Y442. The Extracellular portion of the chain corresponds to F443 to I456. Residues P457–T468 constitute an intramembrane region (helical). Residues T469 to D474 carry the Selectivity filter motif. Residues T469–R476 lie within the membrane without spanning it. The Extracellular segment spans residues P477–K483. The chain crosses the membrane as a helical span at residues I484 to Y512. Over H513–L602 the chain is Cytoplasmic. Over residues A523–G536 the composition is skewed to basic and acidic residues. Positions A523–R543 are disordered. Residue K525 forms a Glycyl lysine isopeptide (Lys-Gly) (interchain with G-Cter in SUMO) linkage. 3 positions are modified to phosphoserine; by PKA: S535, S546, and S569. A PDZ-binding motif is present at residues T600 to L602.

Belongs to the potassium channel family. A (Shaker) (TC 1.A.1.2) subfamily. Kv1.5/KCNA5 sub-subfamily. As to quaternary structure, homotetramer and heterotetramer of potassium channel proteins. Interacts with DLG1, which enhances channel currents. Forms a ternary complex with DLG1 and CAV3. Interacts with KCNAB1. Interacts with UBE2I. Interacts with XIRP2; the interaction is required for normal action potential configuration in the heart. In terms of processing, glycosylated. Post-translationally, sumoylated on Lys-212, and Lys-525, preferentially with SUMO3. Sumoylation regulates the voltage sensitivity of the channel. As to expression, expressed equally in atrium, ventricle, aorta and skeletal muscle. Weaker expression in brain.

Its subcellular location is the cell membrane. It carries out the reaction K(+)(in) = K(+)(out). Voltage-gated potassium channel that mediates transmembrane potassium transport in excitable membranes. Forms tetrameric potassium-selective channels through which potassium ions pass in accordance with their electrochemical gradient. The channel alternates between opened and closed conformations in response to the voltage difference across the membrane. Can form functional homotetrameric channels and heterotetrameric channels that contain variable proportions of KCNA1, KCNA2, KCNA4, KCNA5, and possibly other family members as well; channel properties depend on the type of alpha subunits that are part of the channel. Channel properties are modulated by cytoplasmic beta subunits that regulate the subcellular location of the alpha subunits and promote rapid inactivation. Homotetrameric channels display rapid activation and slow inactivation. Required for normal electrical conduction including formation of the infranodal ventricular conduction system and normal action potential configuration, as a result of its interaction with XIRP2. May play a role in regulating the secretion of insulin in normal pancreatic islets. This is Potassium voltage-gated channel subfamily A member 5 (Kcna5) from Rattus norvegicus (Rat).